A 284-amino-acid polypeptide reads, in one-letter code: Bifunctional protein FolD (284 aa).

Residues 163 to 165 and Ser188 contribute to the NADP(+) site; that span reads GRS.

It belongs to the tetrahydrofolate dehydrogenase/cyclohydrolase family. As to quaternary structure, homodimer.

The enzyme catalyses (6R)-5,10-methylene-5,6,7,8-tetrahydrofolate + NADP(+) = (6R)-5,10-methenyltetrahydrofolate + NADPH. It catalyses the reaction (6R)-5,10-methenyltetrahydrofolate + H2O = (6R)-10-formyltetrahydrofolate + H(+). It participates in one-carbon metabolism; tetrahydrofolate interconversion. Its function is as follows. Catalyzes the oxidation of 5,10-methylenetetrahydrofolate to 5,10-methenyltetrahydrofolate and then the hydrolysis of 5,10-methenyltetrahydrofolate to 10-formyltetrahydrofolate. The polypeptide is Bifunctional protein FolD (Lactococcus lactis subsp. lactis (strain IL1403) (Streptococcus lactis)).